The primary structure comprises 642 residues: Threonine--tRNA ligase (642 aa).

Residues Met1–Thr61 enclose the TGS domain. Residues Asp244–Pro535 are catalytic. Positions 335, 386, and 512 each coordinate Zn(2+).

Belongs to the class-II aminoacyl-tRNA synthetase family. In terms of assembly, homodimer. The cofactor is Zn(2+).

The protein resides in the cytoplasm. It catalyses the reaction tRNA(Thr) + L-threonine + ATP = L-threonyl-tRNA(Thr) + AMP + diphosphate + H(+). Its function is as follows. Catalyzes the attachment of threonine to tRNA(Thr) in a two-step reaction: L-threonine is first activated by ATP to form Thr-AMP and then transferred to the acceptor end of tRNA(Thr). Also edits incorrectly charged L-seryl-tRNA(Thr). The sequence is that of Threonine--tRNA ligase from Vibrio vulnificus (strain CMCP6).